The chain runs to 557 residues: Vanadium-dependent bromoperoxidase (557 aa).

Pyrrolidone carboxylic acid is present on Gln1. A disordered region spans residues 1-22; it reads QTCSTSDDADDPTPPNERDDEA. Cysteines 77 and 86 form a disulfide. 2 residues coordinate vanadate: Lys341 and Arg349. His411 is an active-site residue. 3 residues coordinate vanadate: Ser416, Gly417, and His418. His418 is a catalytic residue. Cysteines 441 and 462 form a disulfide. Vanadate is bound by residues Arg480 and His486. Cys544 and Cys555 are disulfide-bonded.

Belongs to the vanadium-dependent haloperoxidase family. In terms of assembly, homodimer; disulfide-linked. Vanadate serves as cofactor.

It catalyses the reaction RH + Br(-) + H2O2 = RBr + 2 H2O.. Functionally, catalyzes the halogenation of organic substrates in the presence of hydrogen peroxide. In Ascophyllum nodosum (Knotted wrack), this protein is Vanadium-dependent bromoperoxidase.